A 482-amino-acid polypeptide reads, in one-letter code: 2-succinylbenzoate--CoA ligase (482 aa).

It belongs to the ATP-dependent AMP-binding enzyme family. MenE subfamily.

The catalysed reaction is 2-succinylbenzoate + ATP + CoA = 2-succinylbenzoyl-CoA + AMP + diphosphate. It participates in quinol/quinone metabolism; 1,4-dihydroxy-2-naphthoate biosynthesis; 1,4-dihydroxy-2-naphthoate from chorismate: step 5/7. It functions in the pathway quinol/quinone metabolism; menaquinone biosynthesis. In terms of biological role, converts 2-succinylbenzoate (OSB) to 2-succinylbenzoyl-CoA (OSB-CoA). This is 2-succinylbenzoate--CoA ligase from Bacillus cereus (strain AH820).